A 377-amino-acid polypeptide reads, in one-letter code: 2-aminoethylphosphonate--pyruvate transaminase (377 aa).

Lys-194 bears the N6-(pyridoxal phosphate)lysine mark.

The protein belongs to the class-V pyridoxal-phosphate-dependent aminotransferase family. PhnW subfamily. Homodimer. Requires pyridoxal 5'-phosphate as cofactor.

The enzyme catalyses (2-aminoethyl)phosphonate + pyruvate = phosphonoacetaldehyde + L-alanine. In terms of biological role, involved in phosphonate degradation. The protein is 2-aminoethylphosphonate--pyruvate transaminase of Cupriavidus necator (strain ATCC 17699 / DSM 428 / KCTC 22496 / NCIMB 10442 / H16 / Stanier 337) (Ralstonia eutropha).